Here is a 154-residue protein sequence, read N- to C-terminus: Small ribosomal subunit protein uS7c (154 aa).

It belongs to the universal ribosomal protein uS7 family. In terms of assembly, part of the 30S ribosomal subunit.

The protein localises to the plastid. It is found in the chloroplast. One of the primary rRNA binding proteins, it binds directly to 16S rRNA where it nucleates assembly of the head domain of the 30S subunit. This is Small ribosomal subunit protein uS7c (rps7) from Pleurastrum terricola (Filamentous green alga).